Reading from the N-terminus, the 630-residue chain is 1-deoxy-D-xylulose-5-phosphate synthase (630 aa).

Thiamine diphosphate is bound by residues H72 and 113–115 (GHS). Position 144 (D144) interacts with Mg(2+). Thiamine diphosphate is bound by residues 145-146 (GA), N173, Y284, and E367. N173 provides a ligand contact to Mg(2+).

It belongs to the transketolase family. DXPS subfamily. In terms of assembly, homodimer. The cofactor is Mg(2+). It depends on thiamine diphosphate as a cofactor.

It carries out the reaction D-glyceraldehyde 3-phosphate + pyruvate + H(+) = 1-deoxy-D-xylulose 5-phosphate + CO2. The protein operates within metabolic intermediate biosynthesis; 1-deoxy-D-xylulose 5-phosphate biosynthesis; 1-deoxy-D-xylulose 5-phosphate from D-glyceraldehyde 3-phosphate and pyruvate: step 1/1. In terms of biological role, catalyzes the acyloin condensation reaction between C atoms 2 and 3 of pyruvate and glyceraldehyde 3-phosphate to yield 1-deoxy-D-xylulose-5-phosphate (DXP). The sequence is that of 1-deoxy-D-xylulose-5-phosphate synthase from Geobacillus thermodenitrificans (strain NG80-2).